Here is a 298-residue protein sequence, read N- to C-terminus: Glutamate/glycine mitochondrial carrier ymc1 (298 aa).

3 Solcar repeats span residues 14–98 (TKDF…CKRF), 106–193 (VTMP…LVKN), and 206–294 (TPGW…VSQH). 6 consecutive transmembrane segments (helical) span residues 17 to 37 (FLAG…FDCV), 67 to 87 (LAAF…CVSI), 112 to 132 (YVSG…VEHV), 172 to 192 (TAAR…ALVK), 212 to 232 (CVFG…FDIV), and 266 to 287 (FYRG…TFYV).

It belongs to the mitochondrial carrier (TC 2.A.29) family.

The protein resides in the mitochondrion inner membrane. In terms of biological role, acts as a glutamate and glycine mitochondrial transmembrane transporter. This chain is Glutamate/glycine mitochondrial carrier ymc1 (ymc1), found in Schizosaccharomyces pombe (strain 972 / ATCC 24843) (Fission yeast).